A 458-amino-acid polypeptide reads, in one-letter code: Ribulose bisphosphate carboxylase large chain (458 aa).

N6,N6,N6-trimethyllysine is present on lysine 7. Residues asparagine 116 and threonine 166 each contribute to the substrate site. The active-site Proton acceptor is lysine 168. A substrate-binding site is contributed by lysine 170. 3 residues coordinate Mg(2+): lysine 194, aspartate 196, and glutamate 197. N6-carboxylysine is present on lysine 194. Residue histidine 287 is the Proton acceptor of the active site. Substrate contacts are provided by arginine 288, histidine 320, and serine 372.

It belongs to the RuBisCO large chain family. Type I subfamily. Heterohexadecamer of 8 large chains and 8 small chains; disulfide-linked. The disulfide link is formed within the large subunit homodimers. It depends on Mg(2+) as a cofactor. Post-translationally, the disulfide bond which can form in the large chain dimeric partners within the hexadecamer appears to be associated with oxidative stress and protein turnover.

It localises to the plastid. The protein resides in the chloroplast. The enzyme catalyses 2 (2R)-3-phosphoglycerate + 2 H(+) = D-ribulose 1,5-bisphosphate + CO2 + H2O. The catalysed reaction is D-ribulose 1,5-bisphosphate + O2 = 2-phosphoglycolate + (2R)-3-phosphoglycerate + 2 H(+). RuBisCO catalyzes two reactions: the carboxylation of D-ribulose 1,5-bisphosphate, the primary event in carbon dioxide fixation, as well as the oxidative fragmentation of the pentose substrate in the photorespiration process. Both reactions occur simultaneously and in competition at the same active site. In Gladiolus gueinzii (Coastal gladiolus), this protein is Ribulose bisphosphate carboxylase large chain.